The sequence spans 235 residues: Small ribosomal subunit protein uS2 (235 aa).

It belongs to the universal ribosomal protein uS2 family.

This Geobacillus thermodenitrificans (strain NG80-2) protein is Small ribosomal subunit protein uS2.